The primary structure comprises 106 residues: Putative membrane protein insertion efficiency factor (106 aa).

This sequence belongs to the UPF0161 family.

It is found in the cell inner membrane. Functionally, could be involved in insertion of integral membrane proteins into the membrane. This Acinetobacter baumannii (strain SDF) protein is Putative membrane protein insertion efficiency factor.